Here is a 34-residue protein sequence, read N- to C-terminus: N(4)-(Beta-N-acetylglucosaminyl)-L-asparaginase (34 aa).

The active-site Nucleophile is T18.

This sequence belongs to the Ntn-hydrolase family. In terms of assembly, heterotetramer of two alpha and two beta chains arranged as a dimer of alpha/beta heterodimers. Post-translationally, cleaved into an alpha and beta chain by autocatalysis; this activates the enzyme. The N-terminal residue of the beta subunit is responsible for the nucleophile hydrolase activity. In terms of processing, N-glycosylated.

The protein localises to the lysosome. The enzyme catalyses N(4)-(beta-N-acetyl-D-glucosaminyl)-L-asparagine + H2O = N-acetyl-beta-D-glucosaminylamine + L-aspartate + H(+). Its function is as follows. Cleaves the GlcNAc-Asn bond which joins oligosaccharides to the peptide of asparagine-linked glycoproteins. This chain is N(4)-(Beta-N-acetylglucosaminyl)-L-asparaginase (AGA), found in Sus scrofa (Pig).